We begin with the raw amino-acid sequence, 901 residues long: MKYSASTSTPKSAQPKEEELENSLPTNADYSKIDVSKLSEMMQRYVEVKQQYSHALLLFRVGDFFECFFQDAVTIAQELELVQTTKHAGKEIGRVPMTGVPHHAVEKYATFLVEKGYAVVVCDQVEDSAIAKKENRQVKREITRILTPGTLTDDGMLKARYNNYLAAVVIAKNYWGLAYTDISTGEFLTTQTEGLDQLTQELMRLQPSEVLFPTKAPDIGFMLRPGERSDHLPEYLPHSFCYSLRPQQPFSLGEAKERLLMKFQLASLEGLGCERLPLGVRAAGGLLEYLEETQKENQVPLQRLRSYTLADFLILDHQSRRNLEITQTVRDGSYQGSLLSVVDKTSTAMGGRALRRWLQQPLLSLKGIRARHDTIDELIQNNDLRQDIQRVLRQIYDLERLTGRTGAGTANARDLVFLADSLTKLPELSTFVSQGNSPYLKVLQKIPPILQELGKKIHSNLVESPSQKLKEGGLIRPGINERLDEMRKLAEEDQKWIASLETTERERTGIPNLKVGYNKAFGYYISISKSKANLAPDDYTRKQTLTNEERYITEELKEREVRILTAQDDLNELEYDIFVDLRNEVGEYAEEIRNVSRAVAALDILCGLADVAIYQNYVRPTMVDSRELKIIEGRHPVVEKYLPAGFFVPNTAILGSKNLEKNNSGITPYSAPDLIILTGPNASGKSCYLRQVGLIQLMAQIGSFVPASSAVLGVSDRIFTRVGAVDDLATGQSTFMVEMNETANILNHATEKSLVLLDEIGRGTATFDGISIAWSVAEYLATEILSRTIFATHYHELNELSSILDNVANYQVTVKELPDKIVFLHQVQPGGADKSYGIEAGRLAGLPDSVIARARQVMQQIENHSKIAIGLRKGINKKEEEEIITVEQLDIFSEEFGDSLL.

Residues 1–12 (MKYSASTSTPKS) are compositionally biased toward polar residues. The disordered stretch occupies residues 1 to 25 (MKYSASTSTPKSAQPKEEELENSLP). 679–686 (GPNASGKS) is an ATP binding site.

This sequence belongs to the DNA mismatch repair MutS family.

In terms of biological role, this protein is involved in the repair of mismatches in DNA. It is possible that it carries out the mismatch recognition step. This protein has a weak ATPase activity. The sequence is that of DNA mismatch repair protein MutS from Trichodesmium erythraeum (strain IMS101).